The following is a 267-amino-acid chain: Flap endonuclease Xni (267 aa).

D115 is a binding site for Mg(2+). One can recognise a 5'-3' exonuclease domain in the interval 171 to 261; the sequence is VAPAQLVDFW…LGFNLREIRY (91 aa). K(+)-binding residues include L182, V193, and I196. The interval 195–200 is interaction with DNA; it reads GIGPKT.

This sequence belongs to the Xni family. Mg(2+) serves as cofactor. K(+) is required as a cofactor.

In terms of biological role, has flap endonuclease activity. During DNA replication, flap endonucleases cleave the 5'-overhanging flap structure that is generated by displacement synthesis when DNA polymerase encounters the 5'-end of a downstream Okazaki fragment. The polypeptide is Flap endonuclease Xni (Aeromonas hydrophila subsp. hydrophila (strain ATCC 7966 / DSM 30187 / BCRC 13018 / CCUG 14551 / JCM 1027 / KCTC 2358 / NCIMB 9240 / NCTC 8049)).